The sequence spans 310 residues: Methionyl-tRNA formyltransferase (310 aa).

(6S)-5,6,7,8-tetrahydrofolate is bound at residue 109–112 (SLLP).

It belongs to the Fmt family.

It carries out the reaction L-methionyl-tRNA(fMet) + (6R)-10-formyltetrahydrofolate = N-formyl-L-methionyl-tRNA(fMet) + (6S)-5,6,7,8-tetrahydrofolate + H(+). Attaches a formyl group to the free amino group of methionyl-tRNA(fMet). The formyl group appears to play a dual role in the initiator identity of N-formylmethionyl-tRNA by promoting its recognition by IF2 and preventing the misappropriation of this tRNA by the elongation apparatus. This chain is Methionyl-tRNA formyltransferase, found in Pseudomonas putida (strain W619).